The primary structure comprises 109 residues: Protein ELF4-LIKE 3 (109 aa).

Residues 88–109 (SMEASSEGDSSEGRGNRRIRPA) form a disordered region.

Belongs to the EARLY FLOWERING 4 family. As to quaternary structure, homodimer.

Its subcellular location is the nucleus. Functionally, component of the central CCA1/LHY-TOC1 feedback loop in the circadian clock that promotes clock accuracy and is required for sustained rhythms in the absence of daily light/dark cycles. This is Protein ELF4-LIKE 3 (EFL3) from Arabidopsis thaliana (Mouse-ear cress).